A 204-amino-acid chain; its full sequence is Ribosome maturation factor RimP (204 aa).

The interval 176-204 (GNFDESQFDEIEESEGEEADEAEQPPTKH) is disordered. Residues 181–198 (SQFDEIEESEGEEADEAE) show a composition bias toward acidic residues.

Belongs to the RimP family.

Its subcellular location is the cytoplasm. Required for maturation of 30S ribosomal subunits. The chain is Ribosome maturation factor RimP from Cereibacter sphaeroides (strain KD131 / KCTC 12085) (Rhodobacter sphaeroides).